Here is a 228-residue protein sequence, read N- to C-terminus: Cytochrome c oxidase subunit 2 (228 aa).

At 1–26 (MSTWANLGLQDSASPLMEQLIFFHDH) the chain is on the mitochondrial intermembrane side. The helical transmembrane segment at 27–48 (ALLILVMITVLVGYLMFMLFFN) threads the bilayer. Residues 49-62 (NYVNRFLLHGQLIE) lie on the Mitochondrial matrix side of the membrane. A helical transmembrane segment spans residues 63–82 (MIWTILPAIILLFIALPSLR). The Mitochondrial intermembrane segment spans residues 83–228 (LLYLLDEINE…FIKWISSNNS (146 aa)). Histidine 161, cysteine 196, glutamate 198, cysteine 200, histidine 204, and methionine 207 together coordinate Cu cation. Glutamate 198 serves as a coordination point for Mg(2+).

It belongs to the cytochrome c oxidase subunit 2 family. As to quaternary structure, component of the cytochrome c oxidase (complex IV, CIV), a multisubunit enzyme composed of a catalytic core of 3 subunits and several supernumerary subunits. The complex exists as a monomer or a dimer and forms supercomplexes (SCs) in the inner mitochondrial membrane with ubiquinol-cytochrome c oxidoreductase (cytochrome b-c1 complex, complex III, CIII). Requires Cu cation as cofactor.

The protein resides in the mitochondrion inner membrane. It carries out the reaction 4 Fe(II)-[cytochrome c] + O2 + 8 H(+)(in) = 4 Fe(III)-[cytochrome c] + 2 H2O + 4 H(+)(out). Component of the cytochrome c oxidase, the last enzyme in the mitochondrial electron transport chain which drives oxidative phosphorylation. The respiratory chain contains 3 multisubunit complexes succinate dehydrogenase (complex II, CII), ubiquinol-cytochrome c oxidoreductase (cytochrome b-c1 complex, complex III, CIII) and cytochrome c oxidase (complex IV, CIV), that cooperate to transfer electrons derived from NADH and succinate to molecular oxygen, creating an electrochemical gradient over the inner membrane that drives transmembrane transport and the ATP synthase. Cytochrome c oxidase is the component of the respiratory chain that catalyzes the reduction of oxygen to water. Electrons originating from reduced cytochrome c in the intermembrane space (IMS) are transferred via the dinuclear copper A center (CU(A)) of subunit 2 and heme A of subunit 1 to the active site in subunit 1, a binuclear center (BNC) formed by heme A3 and copper B (CU(B)). The BNC reduces molecular oxygen to 2 water molecules using 4 electrons from cytochrome c in the IMS and 4 protons from the mitochondrial matrix. The protein is Cytochrome c oxidase subunit 2 (mt:CoII) of Drosophila yakuba (Fruit fly).